A 345-amino-acid chain; its full sequence is D-fructose 1,6-bisphosphatase class 2/sedoheptulose 1,7-bisphosphatase (345 aa).

4 residues coordinate Mn(2+): aspartate 33, glutamate 57, aspartate 97, and glutamate 100. Residues 100–102 (EGT), tyrosine 131, 176–178 (RPR), and 198–200 (DGD) each bind substrate. Mn(2+) is bound at residue glutamate 225.

This sequence belongs to the FBPase class 2 family. In terms of assembly, homotetramer. It depends on Mn(2+) as a cofactor.

The enzyme catalyses beta-D-fructose 1,6-bisphosphate + H2O = beta-D-fructose 6-phosphate + phosphate. It catalyses the reaction D-sedoheptulose 1,7-bisphosphate + H2O = D-sedoheptulose 7-phosphate + phosphate. The protein operates within carbohydrate biosynthesis; Calvin cycle. Its activity is regulated as follows. Inhibited by AMP and slightly innibited by hydrogen peroxyde. In terms of biological role, catalyzes the hydrolysis of fructose 1,6-bisphosphate (Fru 1,6-P2) and sedoheptulose 1,7-bisphosphate (Sed 1,7-P2) to fructose 6-phosphate and sedoheptulose 7-phosphate, respectively. This Synechococcus elongatus (strain ATCC 33912 / PCC 7942 / FACHB-805) (Anacystis nidulans R2) protein is D-fructose 1,6-bisphosphatase class 2/sedoheptulose 1,7-bisphosphatase.